A 302-amino-acid polypeptide reads, in one-letter code: GATA transcription factor 28 (302 aa).

Residues 47 to 66 (NAGGMSEGVETDIPSHPGNV) are disordered. The 36-residue stretch at 77–112 (GSEQGDQLTLSFQGQVYVFDSVLPEKVQAVLLLLGG) folds into the Tify domain. A disordered region spans residues 119 to 141 (APPGLGSPHQNNRVSSLPGTPQR). Over residues 126–141 (PHQNNRVSSLPGTPQR) the composition is skewed to polar residues. Residues 147 to 189 (RLASLVRFREKRKGRNFDKKIRYTVRKEVALRMQRNKGQFTSA) enclose the CCT domain. A GATA-type zinc finger spans residues 217–273 (QHQEISCRHCGIGEKSTPMMRRGPAGPRTLCNACGLMWANKGAFRDLSKASPQTAQN).

This sequence belongs to the type IV zinc-finger family. Class C subfamily. Predominantly expressed in shoot apices, inflorescences and roots.

It is found in the nucleus. In terms of biological role, transcriptional activator that specifically binds 5'-GATA-3' or 5'-GAT-3' motifs within gene promoters. The polypeptide is GATA transcription factor 28 (GATA28) (Arabidopsis thaliana (Mouse-ear cress)).